The sequence spans 352 residues: CD5 antigen-like (352 aa).

Residues 1–21 (MAPLFNLMLAILSIFVGSCFS) form the signal peptide. SRCR domains are found at residues 27-128 (VQLV…AQCE), 141-241 (VRLV…MECE), and 246-348 (LKLV…VICT). 11 disulfide bridges follow: C36/C70, C52/C117, C65/C127, C98/C108, C166/C230, C179/C240, C211/C221, C255/C289, C271/C337, C284/C347, and C317/C327. N-linked (GlcNAc...) asparagine glycosylation occurs at N99. A glycan (N-linked (GlcNAc...) asparagine) is linked at N229.

As to quaternary structure, interacts with FASN; the interaction is direct. Interacts (via SRCR2 and SRCR3) with pentameric IgM (via Fc region); disulfide-linked. In terms of processing, N-glycosylated. N-glycan at Asn-99 possesses only alpha2,6-sialylated terminals, while Asn-229 possesses both alpha2,6-sialylated and non-sialylated terminals. N-glycosylation increases secretion. Specifically expressed in tissue macrophages. Expressed in thymus, liver, spleen and lymph nodes. Present in Th17 cells; mainly present in non-pathogenic Th17 cells.

The protein resides in the secreted. Its subcellular location is the cytoplasm. In terms of biological role, secreted protein that acts as a key regulator of lipid synthesis: mainly expressed by macrophages in lymphoid and inflamed tissues and regulates mechanisms in inflammatory responses, such as infection or atherosclerosis. Able to inhibit lipid droplet size in adipocytes. Following incorporation into mature adipocytes via CD36-mediated endocytosis, associates with cytosolic FASN, inhibiting fatty acid synthase activity and leading to lipolysis, the degradation of triacylglycerols into glycerol and free fatty acids (FFA). CD5L-induced lipolysis occurs with progression of obesity: participates in obesity-associated inflammation following recruitment of inflammatory macrophages into adipose tissues, a cause of insulin resistance and obesity-related metabolic disease. Regulation of intracellular lipids mediated by CD5L has a direct effect on transcription regulation mediated by nuclear receptors ROR-gamma (RORC). Acts as a key regulator of metabolic switch in T-helper Th17 cells. Regulates the expression of pro-inflammatory genes in Th17 cells by altering the lipid content and limiting synthesis of cholesterol ligand of RORC, the master transcription factor of Th17-cell differentiation. CD5L is mainly present in non-pathogenic Th17 cells, where it decreases the content of polyunsaturated fatty acyls (PUFA), affecting two metabolic proteins MSMO1 and CYP51A1, which synthesize ligands of RORC, limiting RORC activity and expression of pro-inflammatory genes. Participates in obesity-associated autoimmunity via its association with IgM, interfering with the binding of IgM to Fcalpha/mu receptor and enhancing the development of long-lived plasma cells that produce high-affinity IgG autoantibodies. Also acts as an inhibitor of apoptosis in macrophages: promotes macrophage survival from the apoptotic effects of oxidized lipids in case of atherosclerosis. Involved in early response to microbial infection against various pathogens by acting as a pattern recognition receptor and by promoting autophagy. This is CD5 antigen-like (Cd5l) from Mus musculus (Mouse).